Consider the following 148-residue polypeptide: Lysozyme C (148 aa).

The first 18 residues, 1–18, serve as a signal peptide directing secretion; it reads MKVLVILGLVLLSVMVQG. In terms of domain architecture, C-type lysozyme spans 19–148; that stretch reads KVFERCELAR…VSQYVQGCGV (130 aa). 4 cysteine pairs are disulfide-bonded: Cys-24–Cys-146, Cys-48–Cys-134, Cys-83–Cys-99, and Cys-95–Cys-113. Residues Glu-53 and Asp-71 contribute to the active site.

The protein belongs to the glycosyl hydrolase 22 family. In terms of assembly, monomer.

The protein localises to the secreted. The enzyme catalyses Hydrolysis of (1-&gt;4)-beta-linkages between N-acetylmuramic acid and N-acetyl-D-glucosamine residues in a peptidoglycan and between N-acetyl-D-glucosamine residues in chitodextrins.. In terms of biological role, lysozymes have primarily a bacteriolytic function; those in tissues and body fluids are associated with the monocyte-macrophage system and enhance the activity of immunoagents. The chain is Lysozyme C (LYZ) from Saimiri sciureus (Common squirrel monkey).